The chain runs to 263 residues: 5'-nucleotidase SurE (263 aa).

The a divalent metal cation site is built by Asp-8, Asp-9, Ser-40, and Asn-98.

It belongs to the SurE nucleotidase family. A divalent metal cation is required as a cofactor.

It is found in the cytoplasm. The catalysed reaction is a ribonucleoside 5'-phosphate + H2O = a ribonucleoside + phosphate. In terms of biological role, nucleotidase that shows phosphatase activity on nucleoside 5'-monophosphates. The polypeptide is 5'-nucleotidase SurE (Gloeobacter violaceus (strain ATCC 29082 / PCC 7421)).